We begin with the raw amino-acid sequence, 302 residues long: Tyrosine recombinase XerC (302 aa).

The 85-residue stretch at 6–90 (DLEVTCLQDY…AIKQWGEFLL (85 aa)) folds into the Core-binding (CB) domain. In terms of domain architecture, Tyr recombinase spans 111-290 (PLPKNMDVDS…DFQHLAKVYD (180 aa)). Residues Arg-150, Lys-174, His-242, Arg-245, and His-268 contribute to the active site. Tyr-277 acts as the O-(3'-phospho-DNA)-tyrosine intermediate in catalysis.

It belongs to the 'phage' integrase family. XerC subfamily. In terms of assembly, forms a cyclic heterotetrameric complex composed of two molecules of XerC and two molecules of XerD.

The protein resides in the cytoplasm. Site-specific tyrosine recombinase, which acts by catalyzing the cutting and rejoining of the recombining DNA molecules. The XerC-XerD complex is essential to convert dimers of the bacterial chromosome into monomers to permit their segregation at cell division. It also contributes to the segregational stability of plasmids. This is Tyrosine recombinase XerC from Shewanella putrefaciens (strain CN-32 / ATCC BAA-453).